Reading from the N-terminus, the 391-residue chain is Transcription factor TCP3 (391 aa).

The disordered stretch occupies residues Met1–Glu34. Residues Arg49–Leu107 enclose the TCP domain. 3 disordered regions span residues His122–Met168, His317–His345, and Phe363–His391. Residues Lys381–His391 are compositionally biased toward polar residues.

As to quaternary structure, interacts with SPL. Interacts with KIN10; KIN11 and FLZ3. Expressed in cotyledons, particularly in the vascular region, in leaves, roots, buds, flowers and immature siliques.

The protein localises to the nucleus. In terms of biological role, plays a pivotal role in the control of morphogenesis of shoot organs by negatively regulating the expression of boundary-specific genes such as CUC genes, probably through the induction of miRNA (e.g. miR164). Participates in ovule development. The sequence is that of Transcription factor TCP3 (TCP3) from Arabidopsis thaliana (Mouse-ear cress).